We begin with the raw amino-acid sequence, 287 residues long: Eukaryotic translation initiation factor 3 subunit F (287 aa).

The MPN domain occupies 12-142 (VRVHPVVLFQ…IKAYVCVSLG (131 aa)).

It belongs to the eIF-3 subunit F family. As to quaternary structure, component of the eukaryotic translation initiation factor 3 (eIF-3) complex.

It localises to the cytoplasm. In terms of biological role, component of the eukaryotic translation initiation factor 3 (eIF-3) complex, which is involved in protein synthesis of a specialized repertoire of mRNAs and, together with other initiation factors, stimulates binding of mRNA and methionyl-tRNAi to the 40S ribosome. The eIF-3 complex specifically targets and initiates translation of a subset of mRNAs involved in cell proliferation. This chain is Eukaryotic translation initiation factor 3 subunit F, found in Anopheles gambiae (African malaria mosquito).